The primary structure comprises 274 residues: NH(3)-dependent NAD(+) synthetase (274 aa).

46 to 53 (GISGGQDS) provides a ligand contact to ATP. Residue Asp52 coordinates Mg(2+). A deamido-NAD(+)-binding site is contributed by Arg140. An ATP-binding site is contributed by Thr160. Glu165 provides a ligand contact to Mg(2+). Positions 173 and 180 each coordinate deamido-NAD(+). ATP is bound by residues Lys189 and Thr211. Deamido-NAD(+) is bound at residue 260-261 (HK).

It belongs to the NAD synthetase family. As to quaternary structure, homodimer.

It catalyses the reaction deamido-NAD(+) + NH4(+) + ATP = AMP + diphosphate + NAD(+) + H(+). It participates in cofactor biosynthesis; NAD(+) biosynthesis; NAD(+) from deamido-NAD(+) (ammonia route): step 1/1. Functionally, catalyzes the ATP-dependent amidation of deamido-NAD to form NAD. Uses ammonia as a nitrogen source. The chain is NH(3)-dependent NAD(+) synthetase from Pectobacterium carotovorum subsp. carotovorum (strain PC1).